We begin with the raw amino-acid sequence, 481 residues long: Probable squalene synthase (481 aa).

2 helical membrane passes run 294 to 314 and 416 to 436; these read SVFNFVAIPQAMAIATLELVF and FLVLSMIGVLFVMGGLMIGAA.

Belongs to the phytoene/squalene synthase family. Requires Mg(2+) as cofactor.

It localises to the endoplasmic reticulum membrane. The catalysed reaction is 2 (2E,6E)-farnesyl diphosphate + NADPH + H(+) = squalene + 2 diphosphate + NADP(+). It carries out the reaction 2 (2E,6E)-farnesyl diphosphate + NADH + H(+) = squalene + 2 diphosphate + NAD(+). Its pathway is terpene metabolism; lanosterol biosynthesis; lanosterol from farnesyl diphosphate: step 1/3. Functionally, catalyzes the condensation of 2 two farnesyl pyrophosphate moieties to form squalene. It is the first committed enzyme of the sterol biosynthesis pathway. Required for the biosynthesis of ergosterol. The sequence is that of Probable squalene synthase (erg-6) from Neurospora crassa (strain ATCC 24698 / 74-OR23-1A / CBS 708.71 / DSM 1257 / FGSC 987).